The following is a 630-amino-acid chain: Sodium-dependent serotonin transporter (630 aa).

Residues Met1–Asp87 are Cytoplasmic-facing. Residues Glu23–Ser60 are disordered. Residues Ser41–Ala55 show a composition bias toward polar residues. Position 47 is a phosphotyrosine (Tyr47). A helical membrane pass occupies residues Phe88–Asn112. 5 residues coordinate Na(+): Gly94, Ala96, Val97, Asp98, and Asn101. Residue Asp98 participates in serotonin binding. The Extracellular segment spans residues Gly113 to Gly115. The helical transmembrane segment at Ala116–Met135 threads the bilayer. Residues Glu136–Gly160 are Cytoplasmic-facing. Residue Tyr142 is modified to Phosphotyrosine. The chain crosses the membrane as a helical span at residues Ile161–Tyr186. Over Leu187–Ser252 the chain is Extracellular. Cys200 and Cys209 form a disulfide bridge. 2 N-linked (GlcNAc...) asparagine glycosylation sites follow: Asn208 and Asn217. The helical transmembrane segment at Trp253–Trp271 threads the bilayer. Residues Lys272–Ser277 are Cytoplasmic-facing. Thr276 is modified (phosphothreonine). A helical membrane pass occupies residues Gly278–Val297. Residues Arg298 to Gly324 lie on the Extracellular side of the membrane. Residues Val325–Phe347 traverse the membrane as a helical segment. Residue Ser336 participates in Na(+) binding. At Ala348–Asp360 the chain is on the cytoplasmic side. The chain crosses the membrane as a helical span at residues Ala361–Phe380. Asn368 serves as a coordination point for Na(+). The Extracellular segment spans residues Thr381–Thr421. Residues Phe422–Leu443 form a helical membrane-spanning segment. Residues Leu434, Asp437, and Ser438 each coordinate Na(+). Thr439 is a serotonin binding site. Topologically, residues Glu444–Glu463 are cytoplasmic. Residues Trp464–Ser483 traverse the membrane as a helical segment. The Extracellular segment spans residues Gly484–Glu494. The serotonin site is built by Glu494 and Tyr495. Residues Tyr495–Tyr516 form a helical membrane-spanning segment. Topologically, residues Gly517 to Arg538 are cytoplasmic. Residues Ile539–Met558 traverse the membrane as a helical segment. Residues Phe556 and Ser559 each contribute to the serotonin site. At Ser559–Ser574 the chain is on the extracellular side. The chain crosses the membrane as a helical span at residues Ile575–Tyr595. At Arg596–Val630 the chain is on the cytoplasmic side. Residues Thr616–Asp624 are interaction with RAB4A.

The protein belongs to the sodium:neurotransmitter symporter (SNF) (TC 2.A.22) family. SLC6A4 subfamily. As to quaternary structure, monomer or homooligomer. Interacts with TGFB1I1. Interacts with SEC23A, SEC24C and PATJ. Interacts with NOS1; the interaction may diminish the cell surface localization of SERT in the brain and, correspondingly, reduce serotonin reuptake. Interacts (via C-terminus) with SCAMP2; the interaction is direct and retains transporter molecules intracellularly. Interacts with filamentous actin and STX1A. Interacts (via the N-terminus) with STX1A (via the H3 domain); this interaction regulates SLC4A6 channel conductance. Interacts with ITGAV:ITGB3. Interacts (via C-terminus) with ITGB3; this interaction regulates SLC6A4 trafficking. Phosphorylation at Thr-276 increases 5-HT uptake and is required for cGMP-mediated SERT regulation. Expressed in the intestinal crypt epithelial cells and myenteric neurons of the small intestine (at protein level). Expressed in the brain.

It localises to the cell membrane. It is found in the endomembrane system. Its subcellular location is the endosome membrane. The protein localises to the synapse. The protein resides in the cell junction. It localises to the focal adhesion. It is found in the cell projection. Its subcellular location is the neuron projection. The enzyme catalyses serotonin(out) + K(+)(in) + Na(+)(out) + H(+)(in) = serotonin(in) + K(+)(out) + Na(+)(in) + H(+)(out). Functionally, serotonin transporter that cotransports serotonin with one Na(+) ion in exchange for one K(+) ion and possibly one proton in an overall electroneutral transport cycle. Transports serotonin across the plasma membrane from the extracellular compartment to the cytosol thus limiting serotonin intercellular signaling. Essential for serotonin homeostasis in the central nervous system. In the developing somatosensory cortex, acts in glutamatergic neurons to control serotonin uptake and its trophic functions accounting for proper spatial organization of cortical neurons and elaboration of sensory circuits. In the mature cortex, acts primarily in brainstem raphe neurons to mediate serotonin uptake from the synaptic cleft back into the pre-synaptic terminal thus terminating serotonin signaling at the synapse. Modulates mucosal serotonin levels in the gastrointestinal tract through uptake and clearance of serotonin in enterocytes. Required for enteric neurogenesis and gastrointestinal reflexes. Regulates blood serotonin levels by ensuring rapid high affinity uptake of serotonin from plasma to platelets, where it is further stored in dense granules via vesicular monoamine transporters and then released upon stimulation. Mechanistically, the transport cycle starts with an outward-open conformation having Na1(+) and Cl(-) sites occupied. The binding of a second extracellular Na2(+) ion and serotonin substrate leads to structural changes to outward-occluded to inward-occluded to inward-open, where the Na2(+) ion and serotonin are released into the cytosol. Binding of intracellular K(+) ion induces conformational transitions to inward-occluded to outward-open and completes the cycle by releasing K(+) possibly together with a proton bound to Asp-98 into the extracellular compartment. Na1(+) and Cl(-) ions remain bound throughout the transport cycle. Additionally, displays serotonin-induced channel-like conductance for monovalent cations, mainly Na(+) ions. The channel activity is uncoupled from the transport cycle and may contribute to the membrane resting potential or excitability. The protein is Sodium-dependent serotonin transporter (Slc6a4) of Rattus norvegicus (Rat).